The primary structure comprises 94 residues: Co-chaperonin GroES (94 aa).

The protein belongs to the GroES chaperonin family. In terms of assembly, heptamer of 7 subunits arranged in a ring. Interacts with the chaperonin GroEL.

Its subcellular location is the cytoplasm. Its function is as follows. Together with the chaperonin GroEL, plays an essential role in assisting protein folding. The GroEL-GroES system forms a nano-cage that allows encapsulation of the non-native substrate proteins and provides a physical environment optimized to promote and accelerate protein folding. GroES binds to the apical surface of the GroEL ring, thereby capping the opening of the GroEL channel. The protein is Co-chaperonin GroES of Staphylococcus epidermidis.